Reading from the N-terminus, the 219-residue chain is Small ribosomal subunit protein uS3 (219 aa).

A KH type-2 domain is found at 38 to 106; the sequence is IRKFIEKRLV…RVHINIVEIK (69 aa).

The protein belongs to the universal ribosomal protein uS3 family. Part of the 30S ribosomal subunit. Forms a tight complex with proteins S10 and S14.

Binds the lower part of the 30S subunit head. Binds mRNA in the 70S ribosome, positioning it for translation. The sequence is that of Small ribosomal subunit protein uS3 from Levilactobacillus brevis (strain ATCC 367 / BCRC 12310 / CIP 105137 / JCM 1170 / LMG 11437 / NCIMB 947 / NCTC 947) (Lactobacillus brevis).